The chain runs to 186 residues: ATP synthase subunit delta (186 aa).

It belongs to the ATPase delta chain family. F-type ATPases have 2 components, F(1) - the catalytic core - and F(0) - the membrane proton channel. F(1) has five subunits: alpha(3), beta(3), gamma(1), delta(1), epsilon(1). F(0) has three main subunits: a(1), b(2) and c(10-14). The alpha and beta chains form an alternating ring which encloses part of the gamma chain. F(1) is attached to F(0) by a central stalk formed by the gamma and epsilon chains, while a peripheral stalk is formed by the delta and b chains.

The protein localises to the cell inner membrane. F(1)F(0) ATP synthase produces ATP from ADP in the presence of a proton or sodium gradient. F-type ATPases consist of two structural domains, F(1) containing the extramembraneous catalytic core and F(0) containing the membrane proton channel, linked together by a central stalk and a peripheral stalk. During catalysis, ATP synthesis in the catalytic domain of F(1) is coupled via a rotary mechanism of the central stalk subunits to proton translocation. Its function is as follows. This protein is part of the stalk that links CF(0) to CF(1). It either transmits conformational changes from CF(0) to CF(1) or is implicated in proton conduction. This Brucella anthropi (strain ATCC 49188 / DSM 6882 / CCUG 24695 / JCM 21032 / LMG 3331 / NBRC 15819 / NCTC 12168 / Alc 37) (Ochrobactrum anthropi) protein is ATP synthase subunit delta.